We begin with the raw amino-acid sequence, 88 residues long: Small ribosomal subunit protein bS20 (88 aa).

The tract at residues 1–27 (MANSKSAKKRALQSEKRRQHNASRRSM) is disordered.

The protein belongs to the bacterial ribosomal protein bS20 family.

Its function is as follows. Binds directly to 16S ribosomal RNA. This Shewanella denitrificans (strain OS217 / ATCC BAA-1090 / DSM 15013) protein is Small ribosomal subunit protein bS20.